A 207-amino-acid polypeptide reads, in one-letter code: Protein 6b (207 aa).

The interval 160–183 (GNYTEEGEDDDDEMDDEGEAGGAE) is disordered. Acidic residues predominate over residues 164-178 (EEGEDDDDEMDDEGE).

Functionally, involved in tumor formation and increases auxin and cytokinin effects in host plants. The chain is Protein 6b (6b) from Agrobacterium tumefaciens (strain Ach5).